The following is a 145-amino-acid chain: MLSIFKNLLGTSEEDGTTQEANSKDTKGLKEERKRKKRKNKYKIPPGHTQQDWDALVASGKNLSGVESPISVTAEELAKHCSPDDCWMAIRGKVYNVTAYLPYHPVGPKKILKHSGVDATKPYLKHHDWVNEEELLKTSFVGYLV.

The segment at 1–49 (MLSIFKNLLGTSEEDGTTQEANSKDTKGLKEERKRKKRKNKYKIPPGHT) is disordered. A compositionally biased stretch (basic and acidic residues) spans 22–32 (NSKDTKGLKEE). Over residues 33–42 (RKRKKRKNKY) the composition is skewed to basic residues. The residue at position 68 (Ser-68) is a Phosphoserine. The region spanning 69–145 (PISVTAEELA…LKTSFVGYLV (77 aa)) is the Cytochrome b5 heme-binding domain. Heme is bound by residues His-104 and His-127.

Belongs to the cytochrome b5 family.

The protein resides in the cytoplasm. This is an uncharacterized protein from Schizosaccharomyces pombe (strain 972 / ATCC 24843) (Fission yeast).